The following is a 155-amino-acid chain: 6,7-dimethyl-8-ribityllumazine synthase (155 aa).

5-amino-6-(D-ribitylamino)uracil is bound by residues Y23, 57–59 (AWE), and 81–83 (CVI). 86–87 (ET) lines the (2S)-2-hydroxy-3-oxobutyl phosphate pocket. H89 acts as the Proton donor in catalysis. F114 serves as a coordination point for 5-amino-6-(D-ribitylamino)uracil. R128 provides a ligand contact to (2S)-2-hydroxy-3-oxobutyl phosphate.

The protein belongs to the DMRL synthase family.

The enzyme catalyses (2S)-2-hydroxy-3-oxobutyl phosphate + 5-amino-6-(D-ribitylamino)uracil = 6,7-dimethyl-8-(1-D-ribityl)lumazine + phosphate + 2 H2O + H(+). Its pathway is cofactor biosynthesis; riboflavin biosynthesis; riboflavin from 2-hydroxy-3-oxobutyl phosphate and 5-amino-6-(D-ribitylamino)uracil: step 1/2. In terms of biological role, catalyzes the formation of 6,7-dimethyl-8-ribityllumazine by condensation of 5-amino-6-(D-ribitylamino)uracil with 3,4-dihydroxy-2-butanone 4-phosphate. This is the penultimate step in the biosynthesis of riboflavin. The chain is 6,7-dimethyl-8-ribityllumazine synthase from Rhodopirellula baltica (strain DSM 10527 / NCIMB 13988 / SH1).